Consider the following 345-residue polypeptide: NADPH dehydrogenase (345 aa).

23 to 26 (SPMC) contributes to the FMN binding site. Tyr-28 is a binding site for substrate. 2 residues coordinate FMN: Ala-60 and Gln-102. 164–167 (HGAH) serves as a coordination point for substrate. Residues Arg-215 and 307–308 (GR) contribute to the FMN site.

This sequence belongs to the NADH:flavin oxidoreductase/NADH oxidase family. NamA subfamily. Homotetramer. The cofactor is FMN.

The enzyme catalyses A + NADPH + H(+) = AH2 + NADP(+). Its function is as follows. Catalyzes the reduction of the double bond of an array of alpha,beta-unsaturated aldehydes and ketones. It also reduces the nitro group of nitroester and nitroaromatic compounds. It could have a role in detoxification processes. This chain is NADPH dehydrogenase, found in Bacillus cereus (strain Q1).